A 193-amino-acid chain; its full sequence is Adenine phosphoribosyltransferase (193 aa).

The protein belongs to the purine/pyrimidine phosphoribosyltransferase family. In terms of assembly, homodimer.

The protein resides in the cytoplasm. The enzyme catalyses AMP + diphosphate = 5-phospho-alpha-D-ribose 1-diphosphate + adenine. The protein operates within purine metabolism; AMP biosynthesis via salvage pathway; AMP from adenine: step 1/1. Functionally, catalyzes a salvage reaction resulting in the formation of AMP, that is energically less costly than de novo synthesis. The sequence is that of Adenine phosphoribosyltransferase from Bifidobacterium animalis subsp. lactis (strain AD011).